Here is a 554-residue protein sequence, read N- to C-terminus: Valerianol synthase TPS1G (554 aa).

Mg(2+)-binding residues include D307 and D311. The DDXXD motif signature appears at 326-330 (VQRWD). Mg(2+) is bound by residues D452, S456, and E460.

The protein belongs to the terpene synthase family. It depends on Mg(2+) as a cofactor.

It carries out the reaction (2E,6E)-farnesyl diphosphate + H2O = valerianol + diphosphate. The protein operates within secondary metabolite biosynthesis; terpenoid biosynthesis. Its function is as follows. Terpene synthase that catalyzes the biosynthesis of the terpene valerianol, which is a volatile compound of floral scent. The sequence is that of Valerianol synthase TPS1G from Camellia hiemalis (Camellia).